Here is a 398-residue protein sequence, read N- to C-terminus: Acetate kinase (398 aa).

Mg(2+) is bound at residue Asn7. Lys14 is an ATP binding site. Arg91 is a substrate binding site. Asp148 (proton donor/acceptor) is an active-site residue. ATP is bound by residues 208-212, 283-285, and 331-335; these read HLGNG, DSR, and GIGEN. Glu384 provides a ligand contact to Mg(2+).

It belongs to the acetokinase family. In terms of assembly, homodimer. Mg(2+) serves as cofactor. Mn(2+) is required as a cofactor.

The protein resides in the cytoplasm. The catalysed reaction is acetate + ATP = acetyl phosphate + ADP. It participates in metabolic intermediate biosynthesis; acetyl-CoA biosynthesis; acetyl-CoA from acetate: step 1/2. Catalyzes the formation of acetyl phosphate from acetate and ATP. Can also catalyze the reverse reaction. In Halothermothrix orenii (strain H 168 / OCM 544 / DSM 9562), this protein is Acetate kinase.